A 291-amino-acid chain; its full sequence is ATP synthase gamma chain (291 aa).

It belongs to the ATPase gamma chain family. As to quaternary structure, F-type ATPases have 2 components, CF(1) - the catalytic core - and CF(0) - the membrane proton channel. CF(1) has five subunits: alpha(3), beta(3), gamma(1), delta(1), epsilon(1). CF(0) has three main subunits: a, b and c.

It is found in the cell inner membrane. In terms of biological role, produces ATP from ADP in the presence of a proton gradient across the membrane. The gamma chain is believed to be important in regulating ATPase activity and the flow of protons through the CF(0) complex. This is ATP synthase gamma chain from Pelodictyon phaeoclathratiforme (strain DSM 5477 / BU-1).